The primary structure comprises 400 residues: Homoserine O-acetyltransferase (400 aa).

The disordered stretch occupies residues 1-22; it reads MMNVHPVKGPVATGGERPHEAD. The AB hydrolase-1 domain maps to 64-374; the sequence is NAILVCHALT…DKGHDAFLLD (311 aa). The active-site Nucleophile is the S169. Residue R239 coordinates substrate. Catalysis depends on residues D335 and H368. A substrate-binding site is contributed by D369.

Belongs to the AB hydrolase superfamily. MetX family. As to quaternary structure, homodimer.

Its subcellular location is the cytoplasm. It carries out the reaction L-homoserine + acetyl-CoA = O-acetyl-L-homoserine + CoA. The protein operates within amino-acid biosynthesis; L-methionine biosynthesis via de novo pathway; O-acetyl-L-homoserine from L-homoserine: step 1/1. Functionally, transfers an acetyl group from acetyl-CoA to L-homoserine, forming acetyl-L-homoserine. The sequence is that of Homoserine O-acetyltransferase from Rhodopseudomonas palustris (strain HaA2).